Here is a 581-residue protein sequence, read N- to C-terminus: Protein alan shepard (581 aa).

Residues 1-10 are compositionally biased toward pro residues; the sequence is MHPRYSPAPP. Residues 1 to 73 form a disordered region; that stretch reads MHPRYSPAPP…AVTAAPPTPR (73 aa). A Phosphotyrosine modification is found at tyrosine 5. Residues 35–54 show a composition bias toward polar residues; it reads ANNSQQLPPQMPRSQNYANG. Residues 55-68 are compositionally biased toward low complexity; sequence SSSSAAAASAVTAA. A phosphotyrosine mark is found at tyrosine 128 and tyrosine 146. A compositionally biased stretch (low complexity) spans 168–226; the sequence is PATTTYGQRVPTAASPSNTNSSSSSNTGSQSGTLSTSLSHTTNTNTNMGPNGTAQNQNQ. Residues 168-234 form a disordered region; the sequence is PATTTYGQRV…NQQGGGGEQL (67 aa). 2 RRM domains span residues 237 to 310 and 316 to 395; these read TNLY…MAKQ and TNLY…FADG. A disordered region spans residues 555 to 581; sequence MTDSEQASTAASPDEAYTQYPHQAAPK.

Functionally, has a role in the perception of gravity. The sequence is that of Protein alan shepard from Drosophila willistoni (Fruit fly).